Here is a 260-residue protein sequence, read N- to C-terminus: DNA-binding protein RFXANK (260 aa).

A disordered region spans residues 1–79; it reads MELTQPAEDL…STTLTNRQRG (79 aa). Acidic residues predominate over residues 22-33; sequence GDPEDPGEEAAD. Over residues 57–77 the composition is skewed to polar residues; the sequence is SVSSPQAGSSLKHSTTLTNRQ. ANK repeat units follow at residues 89-118, 123-152, 156-185, 189-218, and 222-251; these read LDSLSIHQLAAQGELDQLKEHLRKGDNLVN, RGFTPLIWASAFGEIETVRFLLEWGADPHI, ERESALSLASTGGYTDIVGLLLERDVDINI, NGGTPLLYAVRGNHVKCVEALLARGADLTT, and SGYTPMDLAVALGYRKVQQVIENHILKLFQ.

As to quaternary structure, forms homodimers. The RFX heterotetrameric complex consists of 2 molecules of RFX5 and one each of RFXAP and RFX-B/RFXANK; with each subunit representing a separate complementation group. Interacts (via ankyrin repeats) with RFX5 (via PxLPxI/L motif); the interaction is direct. RFX forms cooperative DNA binding complexes with X2BP and CBF/NF-Y. RFX associates with CIITA to form an active transcriptional complex. Interacts with RAF1. Interacts (via ankyrin repeats) with RFX7 (via PxLPxI/L motif). Phosphorylated by RAF1. In terms of tissue distribution, ubiquitous.

It is found in the cytoplasm. The protein localises to the nucleus. Functionally, activates transcription from class II MHC promoters. Activation requires the activity of the MHC class II transactivator/CIITA. May regulate other genes in the cell. RFX binds the X1 box of MHC-II promoters. May also potentiate the activation of RAF1. In terms of biological role, isoform 2 is not involved in the positive regulation of MHC class II genes. This chain is DNA-binding protein RFXANK (RFXANK), found in Homo sapiens (Human).